A 97-amino-acid polypeptide reads, in one-letter code: Large ribosomal subunit protein bL27 (97 aa).

Residues 1-12 constitute a propeptide that is removed on maturation; it reads MLKMNLANLQLF. Residues 14–37 are disordered; the sequence is HKKGGGSTSNGRDSQAKRLGAKAA.

It belongs to the bacterial ribosomal protein bL27 family. In terms of processing, the N-terminus is cleaved by ribosomal processing cysteine protease Prp.

The chain is Large ribosomal subunit protein bL27 from Streptococcus gordonii (strain Challis / ATCC 35105 / BCRC 15272 / CH1 / DL1 / V288).